Reading from the N-terminus, the 388-residue chain is MRYLTAGESHGPRLTAIIEGVPAGLPLTAEDINEELKRRQGGYGRGSRMQIETDRVEITAGVRHGKTTGAPITLNVTNKDHQKWLDIMAVEDIEEKLKSKRRIKHPRPGHADLVGGMKYRFDDLRNSLERSSARETTMRVAVGAVAKRILAELDIEIANHVVVFGGKEIDVPDGLSVAEIKERAAQSEVSIVNQEREEEIKAYIDQIKRDGDTIGGVIETVVGGVPAGLGSYVQWDKKLDAKLAQAVVSINAFKGVEFGVGFQAGYLKGSQVMDEILWSQEKGYTRRTNNLGGFEGGMTNGEALIIRGVMKPIPTLYKPLMSVDIDTHEPYKATVERSDPTALPAAGVVMESVVATTLATEILEKFSSDNMEELKAAVASHRDYVKNF.

Residues arginine 39 and arginine 45 each contribute to the NADP(+) site. FMN contacts are provided by residues 130-132 (RSS), 251-252 (NA), glycine 296, 311-315 (KPIPT), and arginine 337.

The protein belongs to the chorismate synthase family. In terms of assembly, homotetramer. FMNH2 is required as a cofactor.

The enzyme catalyses 5-O-(1-carboxyvinyl)-3-phosphoshikimate = chorismate + phosphate. Its pathway is metabolic intermediate biosynthesis; chorismate biosynthesis; chorismate from D-erythrose 4-phosphate and phosphoenolpyruvate: step 7/7. Catalyzes the anti-1,4-elimination of the C-3 phosphate and the C-6 proR hydrogen from 5-enolpyruvylshikimate-3-phosphate (EPSP) to yield chorismate, which is the branch point compound that serves as the starting substrate for the three terminal pathways of aromatic amino acid biosynthesis. This reaction introduces a second double bond into the aromatic ring system. The protein is Chorismate synthase of Streptococcus suis (strain 98HAH33).